Consider the following 249-residue polypeptide: Transmembrane protein 150C (249 aa).

The Cytoplasmic portion of the chain corresponds to 1–9 (MDGKKCSVW). Residues 10–30 (MFLPLVFTLFTSAGLWIVYFI) traverse the membrane as a helical segment. Residues 31-64 (AVEDDKILPLNSAERKPGVKHAPYISIAGDDPPA) lie on the Extracellular side of the membrane. A helical membrane pass occupies residues 65–85 (SCVFSQVMNMAAFLALVVAVL). The Cytoplasmic portion of the chain corresponds to 86 to 97 (RFIQLKPKVLNP). The chain crosses the membrane as a helical span at residues 98-118 (WLNISGLVALCLASFGMTLLG). The Extracellular portion of the chain corresponds to 119 to 130 (NFQLTNDEEIHN). The helical transmembrane segment at 131-151 (VGTSLTFGFGTLTCWIQAALT) threads the bilayer. Over 152 to 168 (LKVNIKNEGRRVGIPRV) the chain is Cytoplasmic. A helical transmembrane segment spans residues 169-189 (ILSASITLCVVLYFILMAQSI). At 190-192 (HMY) the chain is on the extracellular side. Residues 193–213 (AARVQWGLVMCFLSYFGTFAV) traverse the membrane as a helical segment. Residues 214 to 249 (EFRHYRYEIVCSEYQENFLSFSESLSEASEYQTDQV) lie on the Cytoplasmic side of the membrane.

It belongs to the DRAM/TMEM150 family.

The protein resides in the cell membrane. It is found in the lysosome membrane. It carries out the reaction Ca(2+)(in) = Ca(2+)(out). It catalyses the reaction Na(+)(in) = Na(+)(out). The enzyme catalyses K(+)(in) = K(+)(out). The catalysed reaction is Mg(2+)(in) = Mg(2+)(out). Nonselective cationic channel with high permeability to Ca(2+). Component of a mechanosensitive cation channel, confers mechanically activated (MA) currents with slow inactivation kinetics. May contribute to proprioception. The protein is Transmembrane protein 150C of Homo sapiens (Human).